Here is a 557-residue protein sequence, read N- to C-terminus: Urocanate hydratase (557 aa).

NAD(+) is bound by residues Gly53–Gly54, Gln131, Gly177–Gly179, Glu197, Arg202, Asn243–Ala244, Gln264–His268, Tyr274–Leu275, and Tyr323. The active site involves Cys411. Positions Leu445–Ser464 are disordered. A compositionally biased stretch (basic and acidic residues) spans Arg455–Ser464. An NAD(+)-binding site is contributed by Gly493.

This sequence belongs to the urocanase family. The cofactor is NAD(+).

It is found in the cytoplasm. The catalysed reaction is 4-imidazolone-5-propanoate = trans-urocanate + H2O. It functions in the pathway amino-acid degradation; L-histidine degradation into L-glutamate; N-formimidoyl-L-glutamate from L-histidine: step 2/3. In terms of biological role, catalyzes the conversion of urocanate to 4-imidazolone-5-propionate. In Pseudomonas putida (strain W619), this protein is Urocanate hydratase.